The following is a 395-amino-acid chain: MGMTTDSMKKEETQKMSENHDWSKLCPDILRKIIESLSSLDFYRAKIVCSDWYSVWKTCVKRPLRPWRIIYRAKYYISTSLMLFDPDEDKIYKNLVGVSDESYRLASSGNWLLMADSRLDFYIVNLLTGKRINLPPMESKIRGAQARFVQSKYFYKSRYICFDNCNSIRISEKEVFESKRAAVLWIDERTGDYFVAWIFNKHYLFTHKKGDDSWCWNRKWTKPGYLDLAYKNNKLYIYNTDNYIKIFDFSGDYPKEDIENNPYHNRPLQYIRGPGEVLLSKRIAIQKSGEVLIILRVIKGYNFLFWIFKMNFERRKWERVDSIGDDEMIIFGHGLTVRAPVQDIGDGVKSGSICFVEYDRQPFSGVFDLATGKVTRPNKFRYHMSYSHWFLPGFA.

Positions 19–70 (NHDWSKLCPDILRKIIESLSSLDFYRAKIVCSDWYSVWKTCVKRPLRPWRII) constitute an F-box domain.

In Arabidopsis thaliana (Mouse-ear cress), this protein is F-box only protein 7 (FBX7).